A 390-amino-acid polypeptide reads, in one-letter code: 2-oxoisovalerate dehydrogenase subunit beta, mitochondrial (390 aa).

The transit peptide at 1–48 (MAAVAARAGGLLRLGAAGAERRRRGLRCAALVQGFLQPAVDDASQKRR) directs the protein to the mitochondrion. Tyr150 is a thiamine diphosphate binding site. K(+) contacts are provided by Gly176, Leu178, Thr179, Cys226, and Asp229. Lys230 is subject to N6-acetyllysine. Asn231 contacts K(+). Residue Lys239 is modified to N6-acetyllysine.

As to quaternary structure, heterotetramer of 2 alpha/BCKDHA and 2 beta chains/BCKDHB that forms the branched-chain alpha-keto acid decarboxylase (E1) component of the BCKD complex. The branched-chain alpha-ketoacid dehydrogenase is a large complex composed of three major building blocks E1, E2 and E3. It is organized around E2, a 24-meric cubic core composed of DBT, to which are associated 6 to 12 copies of E1, and approximately 6 copies of the dehydrogenase E3, a DLD dimer. It depends on thiamine diphosphate as a cofactor.

It is found in the mitochondrion matrix. It catalyses the reaction N(6)-[(R)-lipoyl]-L-lysyl-[protein] + 3-methyl-2-oxobutanoate + H(+) = N(6)-[(R)-S(8)-2-methylpropanoyldihydrolipoyl]-L-lysyl-[protein] + CO2. In terms of biological role, together with BCKDHA forms the heterotetrameric E1 subunit of the mitochondrial branched-chain alpha-ketoacid dehydrogenase (BCKD) complex. The BCKD complex catalyzes the multi-step oxidative decarboxylation of alpha-ketoacids derived from the branched-chain amino-acids valine, leucine and isoleucine producing CO2 and acyl-CoA which is subsequently utilized to produce energy. The E1 subunit catalyzes the first step with the decarboxylation of the alpha-ketoacid forming an enzyme-product intermediate. A reductive acylation mediated by the lipoylamide cofactor of E2 extracts the acyl group from the E1 active site for the next step of the reaction. This Rattus norvegicus (Rat) protein is 2-oxoisovalerate dehydrogenase subunit beta, mitochondrial.